Consider the following 543-residue polypeptide: Cytochrome P450 monooxygenase CYP1 (543 aa).

Residues 40–60 form a helical membrane-spanning segment; sequence SSFFTRILIAFIGLCLLSIFS. N210 and N367 each carry an N-linked (GlcNAc...) asparagine glycan. C478 lines the heme pocket. N517 carries N-linked (GlcNAc...) asparagine glycosylation.

Belongs to the cytochrome P450 family. The cofactor is heme.

It localises to the membrane. It participates in secondary metabolite biosynthesis. Functionally, cytochrome P450 monooxygenase; part of the gene cluster that mediates the biosynthesis of a tyrosine-derived cytochalasan acting as a fungal signal recognized by resistant rice plants and leads to avirulence in Pi33 resistant rice cultivars. The first step in the pathway is catalyzed by the hybrid PKS-NRPS ACE1, assisted by the enoyl reductase RAP1, that are responsible for fusion of the tyrosine precursor and the polyketide backbone. The polyketide synthase module (PKS) of ACE1 is responsible for the synthesis of the polyketide backbone and the downstream nonribosomal peptide synthetase (NRPS) amidates the carboxyl end of the polyketide with the tyrosine precursor. Because ACE1 lacks a designated enoylreductase (ER) domain, the required activity is provided the enoyl reductase RAP1. Reduction by the hydrolyase ORFZ, followed by dehydration and intra-molecular Diels-Alder cyclization by the Diels-Alderase ORF3 then yield the required isoindolone-fused macrocycle. A number of oxidative steps catalyzed by the tailoring enzymes identified within the cluster, including cytochrome P450 monooxygenases CYP1 to CYP4, the FAD-linked oxidoreductase OXR2 and the short-chain dehydrogenase/reductase OXR1, are further required to afford the final cytochalasans that confer avirulence and which have still to be identified. The monooxygenase CYP1 has been shown to be a site-selective C-18 hydroxylase whereas the function of CYP3 is the site-selective epoxidation of the C-6/C-7 olefin that is present in some intermediate compounds. Finally, SYN2 and RAP2 are not required for avirulence in Pi33 resistant rice cultivars. The protein is Cytochrome P450 monooxygenase CYP1 of Pyricularia oryzae (strain 70-15 / ATCC MYA-4617 / FGSC 8958) (Rice blast fungus).